We begin with the raw amino-acid sequence, 179 residues long: Large ribosomal subunit protein uL5 (179 aa).

It belongs to the universal ribosomal protein uL5 family. In terms of assembly, part of the 50S ribosomal subunit; part of the 5S rRNA/L5/L18/L25 subcomplex. Contacts the 5S rRNA and the P site tRNA. Forms a bridge to the 30S subunit in the 70S ribosome.

In terms of biological role, this is one of the proteins that bind and probably mediate the attachment of the 5S RNA into the large ribosomal subunit, where it forms part of the central protuberance. In the 70S ribosome it contacts protein S13 of the 30S subunit (bridge B1b), connecting the 2 subunits; this bridge is implicated in subunit movement. Contacts the P site tRNA; the 5S rRNA and some of its associated proteins might help stabilize positioning of ribosome-bound tRNAs. The protein is Large ribosomal subunit protein uL5 of Macrococcus caseolyticus (strain JCSC5402) (Macrococcoides caseolyticum).